The chain runs to 276 residues: RNA-binding protein pno-1 (276 aa).

2 disordered regions span residues 1 to 30 (MATS…VPST) and 62 to 101 (DVVM…SRVV). Residues 8 to 27 (FDDEFPMEEGMPELLDDEDV) show a composition bias toward acidic residues. In terms of domain architecture, KH spans 197-249 (GDHVSRAIGRIAGKDGRTKLVIENTTKTRIVVANTKIHILGAYQNLKLARNAV).

It belongs to the PNO1 family. As to quaternary structure, part of the small subunit (SSU) processome, composed of more than 70 proteins and the RNA chaperone small nucleolar RNA (snoRNA) U3.

Its subcellular location is the nucleus. The protein localises to the nucleolus. Part of the small subunit (SSU) processome, first precursor of the small eukaryotic ribosomal subunit. During the assembly of the SSU processome in the nucleolus, many ribosome biogenesis factors, an RNA chaperone and ribosomal proteins associate with the nascent pre-rRNA and work in concert to generate RNA folding, modifications, rearrangements and cleavage as well as targeted degradation of pre-ribosomal RNA by the RNA exosome. Positively regulates dimethylation of two adjacent adenosines in the loop of a conserved hairpin near the 3'-end of 18S rRNA. This chain is RNA-binding protein pno-1, found in Caenorhabditis briggsae.